A 414-amino-acid chain; its full sequence is 3-ketoacyl-CoA thiolase, peroxisomal (414 aa).

Residues 1–9 (MDRLNNLAT) constitute a peroxisome transit peptide. The segment at 1–9 (MDRLNNLAT) is PTS2-type peroxisomal targeting signal. C115 serves as the catalytic Acyl-thioester intermediate. Residues H370 and C400 each act as proton acceptor in the active site.

This sequence belongs to the thiolase-like superfamily. Thiolase family. In terms of assembly, homodimer. Interacts (via PTS2-type peroxisomal targeting signal region) with PEX7; leading to its translocation into peroxisomes.

Its subcellular location is the peroxisome. It carries out the reaction an acyl-CoA + acetyl-CoA = a 3-oxoacyl-CoA + CoA. It participates in lipid metabolism; fatty acid metabolism. In terms of biological role, responsible for the thiolytic cleavage of straight chain 3-keto fatty acyl-CoAs (3-oxoacyl-CoAs). The polypeptide is 3-ketoacyl-CoA thiolase, peroxisomal (POT1) (Yarrowia lipolytica (strain CLIB 122 / E 150) (Yeast)).